The following is a 202-amino-acid chain: Recombination protein RecR (202 aa).

Residues 56 to 71 (CVVCGTVSDKEHCRIC) form a C4-type zinc finger. Residues 79–179 (TVICVVEEPK…TVSRLASGLP (101 aa)) enclose the Toprim domain.

Belongs to the RecR family.

May play a role in DNA repair. It seems to be involved in an RecBC-independent recombinational process of DNA repair. It may act with RecF and RecO. This chain is Recombination protein RecR, found in Rhodococcus jostii (strain RHA1).